Reading from the N-terminus, the 446-residue chain is Tubulin beta chain (446 aa).

Gln11, Glu69, Ser138, Gly142, Thr143, Gly144, Asn204, and Asn226 together coordinate GTP. Residue Glu69 coordinates Mg(2+). The tract at residues 425-446 is disordered; it reads YQEASISEGEEEYPEEVSNEEE. Residues 432 to 446 show a composition bias toward acidic residues; it reads EGEEEYPEEVSNEEE.

It belongs to the tubulin family. As to quaternary structure, dimer of alpha and beta chains. A typical microtubule is a hollow water-filled tube with an outer diameter of 25 nm and an inner diameter of 15 nM. Alpha-beta heterodimers associate head-to-tail to form protofilaments running lengthwise along the microtubule wall with the beta-tubulin subunit facing the microtubule plus end conferring a structural polarity. Microtubules usually have 13 protofilaments but different protofilament numbers can be found in some organisms and specialized cells. Mg(2+) is required as a cofactor.

It localises to the cytoplasm. The protein localises to the cytoskeleton. Tubulin is the major constituent of microtubules, a cylinder consisting of laterally associated linear protofilaments composed of alpha- and beta-tubulin heterodimers. Microtubules grow by the addition of GTP-tubulin dimers to the microtubule end, where a stabilizing cap forms. Below the cap, tubulin dimers are in GDP-bound state, owing to GTPase activity of alpha-tubulin. The sequence is that of Tubulin beta chain (TUB2) from Blumeria hordei (Barley powdery mildew).